Reading from the N-terminus, the 432-residue chain is Glutamyl-tRNA reductase (432 aa).

Substrate is bound by residues 49-52, serine 101, 106-108, and glutamine 112; these read TCNR and ESQ. Catalysis depends on cysteine 50, which acts as the Nucleophile. An NADP(+)-binding site is contributed by 181 to 186; that stretch reads GAGETI. The segment at 410–432 is disordered; that stretch reads KPGYHHPTLQTTIVKTDETDPAS.

This sequence belongs to the glutamyl-tRNA reductase family. As to quaternary structure, homodimer.

The enzyme catalyses (S)-4-amino-5-oxopentanoate + tRNA(Glu) + NADP(+) = L-glutamyl-tRNA(Glu) + NADPH + H(+). It participates in porphyrin-containing compound metabolism; protoporphyrin-IX biosynthesis; 5-aminolevulinate from L-glutamyl-tRNA(Glu): step 1/2. Its function is as follows. Catalyzes the NADPH-dependent reduction of glutamyl-tRNA(Glu) to glutamate 1-semialdehyde (GSA). This chain is Glutamyl-tRNA reductase, found in Xylella fastidiosa (strain M23).